A 356-amino-acid polypeptide reads, in one-letter code: Trans-enoyl reductase pgmF (356 aa).

NADP(+) contacts are provided by residues 57-60 (VDFK), 175-178 (SGGC), 198-201 (STPN), Tyr216, 261-262 (VG), and 342-343 (AK).

The protein belongs to the zinc-containing alcohol dehydrogenase family.

FAD-linked oxidoreductase; part of the gene cluster that mediates the biosynthesis of pleosporalin A, ascomycone A, as well as a third cryptic naphthoquinone derived pigment, all responsible for the coloration of conidia. The pathway begins with the biosynthesis of the cyclized heptaketide 3-acetonyl-1,6,8-trihydroxy-2-naphthaldehyde by the NR-PKS pgmA. The C-6 hydroxyl group is further methylated by the O-methyltransferase pgmB to yield fusarubinaldehyde which is in turn oxidized by the cytochrome P450 monooxygenase pgmC at C-9. The C-1 hydroxyl group is then methylated spontaneously. Although pgmE, pgmD and pgmH are essential for the production of pleosporalin A, it is not the case for the 2 other final products and it remains difficult to assign a specific function to each enzyme. PgmF and pgmG seem not to be involved in pigment biosynthesis although they were regulated by the cluster-specific transcription factor pgmR. The sequence is that of Trans-enoyl reductase pgmF from Aspergillus terreus (strain NIH 2624 / FGSC A1156).